The primary structure comprises 507 residues: Archaeal-type glutamate synthase [NADPH] (507 aa).

2 consecutive 4Fe-4S ferredoxin-type domains span residues 10–39 (FVVERDDYKCIRCLACVRVCSYGANYYDEN) and 41–70 (NRVYTENYKCVGCHFCEAICPTEAITVRRN). Residues C19, C22, C25, C29, C50, C53, C56, and C60 each coordinate [4Fe-4S] cluster.

This sequence belongs to the glutamate synthase family. FMN is required as a cofactor.

The catalysed reaction is 2 L-glutamate + NADP(+) = L-glutamine + 2-oxoglutarate + NADPH + H(+). This chain is Archaeal-type glutamate synthase [NADPH], found in Thermotoga neapolitana (strain ATCC 49049 / DSM 4359 / NBRC 107923 / NS-E).